Here is a 286-residue protein sequence, read N- to C-terminus: Undecaprenyl-diphosphatase (286 aa).

8 consecutive transmembrane segments (helical) span residues 17–37 (VVLG…TAHL), 49–69 (PGVA…IGYF), 98–118 (IAIA…KLFW), 126–146 (LRSV…LALA), 159–179 (VQGL…IPGV), 204–224 (FLLG…GAFA), 232–252 (LPML…IAWL), and 261–281 (TWPF…LVLA).

Belongs to the UppP family.

The protein localises to the cell inner membrane. The enzyme catalyses di-trans,octa-cis-undecaprenyl diphosphate + H2O = di-trans,octa-cis-undecaprenyl phosphate + phosphate + H(+). Catalyzes the dephosphorylation of undecaprenyl diphosphate (UPP). Confers resistance to bacitracin. This Synechococcus sp. (strain RCC307) protein is Undecaprenyl-diphosphatase.